A 280-amino-acid chain; its full sequence is Phosphatidylserine decarboxylase proenzyme (280 aa).

Residues D86, H143, and S246 each act as charge relay system; for autoendoproteolytic cleavage activity in the active site. The active-site Schiff-base intermediate with substrate; via pyruvic acid; for decarboxylase activity is the S246. S246 carries the post-translational modification Pyruvic acid (Ser); by autocatalysis.

This sequence belongs to the phosphatidylserine decarboxylase family. PSD-B subfamily. Prokaryotic type I sub-subfamily. In terms of assembly, heterodimer of a large membrane-associated beta subunit and a small pyruvoyl-containing alpha subunit. Requires pyruvate as cofactor. Is synthesized initially as an inactive proenzyme. Formation of the active enzyme involves a self-maturation process in which the active site pyruvoyl group is generated from an internal serine residue via an autocatalytic post-translational modification. Two non-identical subunits are generated from the proenzyme in this reaction, and the pyruvate is formed at the N-terminus of the alpha chain, which is derived from the carboxyl end of the proenzyme. The autoendoproteolytic cleavage occurs by a canonical serine protease mechanism, in which the side chain hydroxyl group of the serine supplies its oxygen atom to form the C-terminus of the beta chain, while the remainder of the serine residue undergoes an oxidative deamination to produce ammonia and the pyruvoyl prosthetic group on the alpha chain. During this reaction, the Ser that is part of the protease active site of the proenzyme becomes the pyruvoyl prosthetic group, which constitutes an essential element of the active site of the mature decarboxylase.

It is found in the cell membrane. It catalyses the reaction a 1,2-diacyl-sn-glycero-3-phospho-L-serine + H(+) = a 1,2-diacyl-sn-glycero-3-phosphoethanolamine + CO2. The protein operates within phospholipid metabolism; phosphatidylethanolamine biosynthesis; phosphatidylethanolamine from CDP-diacylglycerol: step 2/2. Functionally, catalyzes the formation of phosphatidylethanolamine (PtdEtn) from phosphatidylserine (PtdSer). This is Phosphatidylserine decarboxylase proenzyme from Brevibacillus brevis (strain 47 / JCM 6285 / NBRC 100599).